The chain runs to 338 residues: RNA 3'-terminal phosphate cyclase (338 aa).

ATP is bound by residues Q103 and 283–287 (YLADQ). Residue H308 is the Tele-AMP-histidine intermediate of the active site.

It belongs to the RNA 3'-terminal cyclase family. Type 1 subfamily.

The protein localises to the cytoplasm. It carries out the reaction a 3'-end 3'-phospho-ribonucleotide-RNA + ATP = a 3'-end 2',3'-cyclophospho-ribonucleotide-RNA + AMP + diphosphate. Functionally, catalyzes the conversion of 3'-phosphate to a 2',3'-cyclic phosphodiester at the end of RNA. The mechanism of action of the enzyme occurs in 3 steps: (A) adenylation of the enzyme by ATP; (B) transfer of adenylate to an RNA-N3'P to produce RNA-N3'PP5'A; (C) and attack of the adjacent 2'-hydroxyl on the 3'-phosphorus in the diester linkage to produce the cyclic end product. The biological role of this enzyme is unknown but it is likely to function in some aspects of cellular RNA processing. This Escherichia coli (strain K12 / MC4100 / BW2952) protein is RNA 3'-terminal phosphate cyclase.